Consider the following 110-residue polypeptide: Protein SPIRAL1-like 2 (110 aa).

The segment at 28-110 (AVNKTPAETE…LDYLFGGGSN (83 aa)) is disordered. Residues 40–52 (AHAPPTQAAAANA) show a composition bias toward low complexity. A compositionally biased stretch (polar residues) spans 63–82 (LNSNSANNYMRAEGQNTGNF). Ser67 is subject to Phosphoserine. Residues 95-110 (PGGGSSLDYLFGGGSN) are compositionally biased toward gly residues.

This sequence belongs to the SPIRAL1 family. Ubiquitous.

Its function is as follows. Acts redundantly with SPR1 in maintaining the cortical microtubules organization essential for anisotropic cell growth. In Arabidopsis thaliana (Mouse-ear cress), this protein is Protein SPIRAL1-like 2 (SP1L2).